The sequence spans 155 residues: Small ribosomal subunit protein uS7 (155 aa).

Belongs to the universal ribosomal protein uS7 family. In terms of assembly, part of the 30S ribosomal subunit. Contacts proteins S9 and S11.

Its function is as follows. One of the primary rRNA binding proteins, it binds directly to 16S rRNA where it nucleates assembly of the head domain of the 30S subunit. Is located at the subunit interface close to the decoding center, probably blocks exit of the E-site tRNA. This is Small ribosomal subunit protein uS7 from Amoebophilus asiaticus (strain 5a2).